The primary structure comprises 100 residues: Testis development-related protein 1 (100 aa).

Positions 73–100 are disordered; the sequence is GLGSLGGQDSSGSLVQRASCELESPYEL.

As to expression, expressed in the testis but not in any other non-reproductive tissues (at protein level). Mainly located in spermatogenic cells in seminiferous tubules of adult testis.

Its subcellular location is the cytoplasm. In Homo sapiens (Human), this protein is Testis development-related protein 1 (TDRG1).